A 388-amino-acid chain; its full sequence is Outer membrane protein assembly factor BamB (388 aa).

The N-terminal stretch at methionine 1–alanine 21 is a signal peptide. Cysteine 22 carries N-palmitoyl cysteine lipidation. The S-diacylglycerol cysteine moiety is linked to residue cysteine 22.

The protein belongs to the BamB family. As to quaternary structure, part of the Bam complex.

The protein resides in the cell outer membrane. In terms of biological role, part of the outer membrane protein assembly complex, which is involved in assembly and insertion of beta-barrel proteins into the outer membrane. This Kangiella koreensis (strain DSM 16069 / JCM 12317 / KCTC 12182 / SW-125) protein is Outer membrane protein assembly factor BamB.